Consider the following 251-residue polypeptide: 3-deoxy-manno-octulosonate cytidylyltransferase (251 aa).

This sequence belongs to the KdsB family.

The protein localises to the cytoplasm. It carries out the reaction 3-deoxy-alpha-D-manno-oct-2-ulosonate + CTP = CMP-3-deoxy-beta-D-manno-octulosonate + diphosphate. It functions in the pathway nucleotide-sugar biosynthesis; CMP-3-deoxy-D-manno-octulosonate biosynthesis; CMP-3-deoxy-D-manno-octulosonate from 3-deoxy-D-manno-octulosonate and CTP: step 1/1. The protein operates within bacterial outer membrane biogenesis; lipopolysaccharide biosynthesis. In terms of biological role, activates KDO (a required 8-carbon sugar) for incorporation into bacterial lipopolysaccharide in Gram-negative bacteria. This chain is 3-deoxy-manno-octulosonate cytidylyltransferase, found in Vibrio vulnificus (strain CMCP6).